Here is a 271-residue protein sequence, read N- to C-terminus: Protein phosphatase 1 regulatory subunit 3B-B (271 aa).

The PP1-binding motif signature appears at arginine 56–phenylalanine 59. A CBM21 domain is found at arginine 119–valine 227.

In terms of assembly, interacts with glycogen, PPP1CC catalytic subunit of PP1 and PYGL. Associates with glycogen particles. Forms complexes with debranching enzyme, glycogen phosphorylase, glycogen synthase and phosphorylase kinase which is necessary for its regulation of PP1 activity.

Acts as a glycogen-targeting subunit for phosphatase PP1. Facilitates interaction of the PP1 with enzymes of the glycogen metabolism and regulates its activity. Suppresses the rate at which PP1 dephosphorylates (inactivates) glycogen phosphorylase and enhances the rate at which it activates glycogen synthase and therefore limits glycogen breakdown. This chain is Protein phosphatase 1 regulatory subunit 3B-B (ppp1r3b-b), found in Xenopus laevis (African clawed frog).